Consider the following 336-residue polypeptide: Probable deoxyhypusine synthase (336 aa).

The active-site Nucleophile is Lys308.

The protein belongs to the deoxyhypusine synthase family. Requires NAD(+) as cofactor.

The catalysed reaction is [eIF5A protein]-L-lysine + spermidine = [eIF5A protein]-deoxyhypusine + propane-1,3-diamine. It participates in protein modification; eIF5A hypusination. Its function is as follows. Catalyzes the NAD-dependent oxidative cleavage of spermidine and the subsequent transfer of the butylamine moiety of spermidine to the epsilon-amino group of a specific lysine residue of the eIF-5A precursor protein to form the intermediate deoxyhypusine residue. In Thermococcus gammatolerans (strain DSM 15229 / JCM 11827 / EJ3), this protein is Probable deoxyhypusine synthase.